A 119-amino-acid chain; its full sequence is Large ribosomal subunit protein uL22 (119 aa).

This sequence belongs to the universal ribosomal protein uL22 family. Part of the 50S ribosomal subunit.

Functionally, this protein binds specifically to 23S rRNA; its binding is stimulated by other ribosomal proteins, e.g. L4, L17, and L20. It is important during the early stages of 50S assembly. It makes multiple contacts with different domains of the 23S rRNA in the assembled 50S subunit and ribosome. In terms of biological role, the globular domain of the protein is located near the polypeptide exit tunnel on the outside of the subunit, while an extended beta-hairpin is found that lines the wall of the exit tunnel in the center of the 70S ribosome. This is Large ribosomal subunit protein uL22 from Rickettsia rickettsii (strain Iowa).